The following is a 375-amino-acid chain: DNA replication and repair protein RecF (375 aa).

30 to 37 (GENAQGKT) is an ATP binding site.

It belongs to the RecF family.

It is found in the cytoplasm. Functionally, the RecF protein is involved in DNA metabolism; it is required for DNA replication and normal SOS inducibility. RecF binds preferentially to single-stranded, linear DNA. It also seems to bind ATP. This Latilactobacillus sakei subsp. sakei (strain 23K) (Lactobacillus sakei subsp. sakei) protein is DNA replication and repair protein RecF.